The primary structure comprises 309 residues: Taste receptor type 2 member 8 (309 aa).

At 1–7 (MFSPADN) the chain is on the extracellular side. A helical membrane pass occupies residues 8–28 (IFIILITGEFILGILGNGYIA). At 29-50 (LVNWIDWIKKKKISTVDYILTN) the chain is on the cytoplasmic side. A helical membrane pass occupies residues 51 to 71 (LVIARICLISVMVVNGIVIVL). Over 72–82 (NPDVYTKNKQQ) the chain is Extracellular. Residues 83–103 (IVIFTFWTFANYLNMWITTCL) form a helical membrane-spanning segment. At 104–131 (NVFYFLKIASSSHPLFLWLKWKIDMVVH) the chain is on the cytoplasmic side. Residues 132-152 (WILLGCFAISLLVSLIAAIVL) traverse the membrane as a helical segment. At 153 to 184 (SCDYRFHAIAKHKRNITEMFHVSKXPYFEPLT) the chain is on the extracellular side. N167 carries N-linked (GlcNAc...) asparagine glycosylation. The chain crosses the membrane as a helical span at residues 185 to 205 (LFNLFAIVPFIVSLISFFLLV). Residues 206 to 239 (RSLWRHTKQIKLYATGSRDPSTEVHVRAIKTMTS) are Cytoplasmic-facing. The helical transmembrane segment at 240 to 260 (FIFFFFLYFISSILMTFSYLM) threads the bilayer. Residues 261–266 (TKYKLA) lie on the Extracellular side of the membrane. The helical transmembrane segment at 267–287 (VEFGEIAAILYPLGHSLILIV) threads the bilayer. Topologically, residues 288-309 (LNNKLRQIFVRMLTCRKIACVI) are cytoplasmic.

This sequence belongs to the G-protein coupled receptor T2R family.

It is found in the membrane. Functionally, receptor that may play a role in the perception of bitterness and is gustducin-linked. May play a role in sensing the chemical composition of the gastrointestinal content. The activity of this receptor may stimulate alpha gustducin, mediate PLC-beta-2 activation and lead to the gating of TRPM5. This Pan paniscus (Pygmy chimpanzee) protein is Taste receptor type 2 member 8 (TAS2R8).